Here is a 328-residue protein sequence, read N- to C-terminus: DNA repair and recombination protein RadA (328 aa).

118–125 (GEYGSGKT) serves as a coordination point for ATP.

The protein belongs to the eukaryotic RecA-like protein family.

Its function is as follows. Involved in DNA repair and in homologous recombination. Binds and assemble on single-stranded DNA to form a nucleoprotein filament. Hydrolyzes ATP in a ssDNA-dependent manner and promotes DNA strand exchange between homologous DNA molecules. This is DNA repair and recombination protein RadA from Desulfurococcus amylolyticus (strain DSM 18924 / JCM 16383 / VKM B-2413 / 1221n) (Desulfurococcus kamchatkensis).